The chain runs to 116 residues: MTHPVITAARFNEAGLIPAIAQQHDTGEVLMMAWMNAESIAESLSTGQVCYFSRSRGKLWRKGESSGHVQRLVEMRLDCDGDTLLLLVEQTGPACHTGAHNCFFRRVTKDGLEEIA.

Residue Asp78 coordinates Mg(2+). Position 79 (Cys79) interacts with Zn(2+). Mg(2+)-binding residues include Asp80 and Asp82. Cys95 and Cys102 together coordinate Zn(2+).

This sequence belongs to the PRA-CH family. In terms of assembly, homodimer. Mg(2+) is required as a cofactor. It depends on Zn(2+) as a cofactor.

The protein resides in the cytoplasm. The catalysed reaction is 1-(5-phospho-beta-D-ribosyl)-5'-AMP + H2O = 1-(5-phospho-beta-D-ribosyl)-5-[(5-phospho-beta-D-ribosylamino)methylideneamino]imidazole-4-carboxamide. It functions in the pathway amino-acid biosynthesis; L-histidine biosynthesis; L-histidine from 5-phospho-alpha-D-ribose 1-diphosphate: step 3/9. Functionally, catalyzes the hydrolysis of the adenine ring of phosphoribosyl-AMP. The chain is Phosphoribosyl-AMP cyclohydrolase from Acidiphilium cryptum (strain JF-5).